Reading from the N-terminus, the 87-residue chain is Omega-theraphotoxin-Gr1a (87 aa).

The N-terminal stretch at 1–24 is a signal peptide; the sequence is MKAQIFVVVLGLAALSVLCYGSEA. Residues 25–49 constitute a propeptide that is removed on maturation; sequence DESALHEEIFQLLAASDEVPKPQER. Cystine bridges form between cysteine 51–cysteine 65, cysteine 58–cysteine 70, and cysteine 64–cysteine 79. Valine amide is present on valine 85.

In terms of tissue distribution, expressed by the venom gland.

It localises to the secreted. In terms of biological role, inhibits P/Q- (Cav2.1/CACNA1A) and N-type (Cav2.2/CACNA1B) voltage-gated calcium channel by modifying voltage-dependent gating. It selectively and reversibly blocks the calcium channels coupled to glutamate release. Also inhibits potassium channels (Kv2.1/KCNB1) with lower affinity. Has also been shown to weakly inhibit Kv11.1/KCNH2/ERG1, Kv1.2/KCNA2, Kv1.3/KCNA3, Nav1.5/SCN5A, Nav1.7/SCN9A and TRPV1. This chain is Omega-theraphotoxin-Gr1a, found in Grammostola rosea (Chilean rose tarantula).